Reading from the N-terminus, the 351-residue chain is MTIAIGQNQERGLFDLIDDWLKKDRFVFIGWSGLLLFPTAYLAAGGWMTGTTFVTSWYTHGLASSYLEGCNFLTAAVSTPANSMGHSLLLLWGPEAQGDFTRWCQIGGLWAFIALHGAFGLIGFCLRQFEIARLVGIRPYNAIAFSGPIAVFVSVFLLYPLGQASWFFAPSFGVAAIFRFLLFLQGFHNWTLNPFHMMGVAGILGGALLCAIHGATVENTLFEDGDAANTFRAFTPTQSEETYSMVTANRFWSQIFGVAFSNKRWLHFFMLFVPVTGLWTSAIGIVGLALNLRAYDFVSQELRAAEDPEFETFYTKNILLNEGIRAWMAAQDQPHENFVFPEEVLPRGNAL.

The helical transmembrane segment at 39–59 (TAYLAAGGWMTGTTFVTSWYT) threads the bilayer. H116 provides a ligand contact to chlorophyll a. The helical transmembrane segment at 123-139 (GFCLRQFEIARLVGIRP) threads the bilayer. Pheophytin a is bound by residues Q128 and N141. Residues 151 to 164 (VFVSVFLLYPLGQA) form a helical membrane-spanning segment. H196 provides a ligand contact to chlorophyll a. The chain crosses the membrane as a helical span at residues 206–226 (GALLCAIHGATVENTLFEDGD). Residues H213 and F260 each coordinate a plastoquinone. H213 provides a ligand contact to Fe cation. H267 is a Fe cation binding site. A helical transmembrane segment spans residues 277–293 (GLWTSAIGIVGLALNLR).

This sequence belongs to the reaction center PufL/M/PsbA/D family. As to quaternary structure, PSII is composed of 1 copy each of membrane proteins PsbA, PsbB, PsbC, PsbD, PsbE, PsbF, PsbH, PsbI, PsbJ, PsbK, PsbL, PsbM, PsbT, PsbX, PsbY, PsbZ, Psb30/Ycf12, at least 3 peripheral proteins of the oxygen-evolving complex and a large number of cofactors. It forms dimeric complexes. It depends on The D1/D2 heterodimer binds P680, chlorophylls that are the primary electron donor of PSII, and subsequent electron acceptors. It shares a non-heme iron and each subunit binds pheophytin, quinone, additional chlorophylls, carotenoids and lipids. There is also a Cl(-1) ion associated with D1 and D2, which is required for oxygen evolution. The PSII complex binds additional chlorophylls, carotenoids and specific lipids. as a cofactor.

Its subcellular location is the plastid. It is found in the chloroplast thylakoid membrane. It catalyses the reaction 2 a plastoquinone + 4 hnu + 2 H2O = 2 a plastoquinol + O2. Its function is as follows. Photosystem II (PSII) is a light-driven water:plastoquinone oxidoreductase that uses light energy to abstract electrons from H(2)O, generating O(2) and a proton gradient subsequently used for ATP formation. It consists of a core antenna complex that captures photons, and an electron transfer chain that converts photonic excitation into a charge separation. The D1/D2 (PsbA/PsbD) reaction center heterodimer binds P680, the primary electron donor of PSII as well as several subsequent electron acceptors. D2 is needed for assembly of a stable PSII complex. The chain is Photosystem II D2 protein from Trieres chinensis (Marine centric diatom).